Consider the following 146-residue polypeptide: Putative pre-16S rRNA nuclease (146 aa).

This sequence belongs to the YqgF nuclease family.

The protein localises to the cytoplasm. Functionally, could be a nuclease involved in processing of the 5'-end of pre-16S rRNA. In Pseudomonas syringae pv. tomato (strain ATCC BAA-871 / DC3000), this protein is Putative pre-16S rRNA nuclease.